We begin with the raw amino-acid sequence, 319 residues long: uncharacterized protein (319 aa).

Residues 21–70 (ETETLKNSTDEVQTSSSFSSSGGRQSSPLTSGSKLEREKQTPSLEQGDTQ) form a disordered region. Residues 25–34 (LKNSTDEVQT) are compositionally biased toward polar residues. A compositionally biased stretch (low complexity) spans 35–51 (SSSFSSSGGRQSSPLTS). Residues 61-70 (TPSLEQGDTQ) are compositionally biased toward polar residues.

This is an uncharacterized protein from Homo sapiens (Human).